We begin with the raw amino-acid sequence, 109 residues long: MNSVLGNQTDVAGLFLVNSSEALERAVRCCTQASVVTDDGFAEGGPDERSLYIMRVVQIAVMCVLSLTVVFGIFFLGCNLLIKSEGMINFLVKDRRPSKEVEAVVVGPY.

N-linked (GlcNAc...) asparagine glycosylation is found at asparagine 7 and asparagine 18. A helical membrane pass occupies residues 56–76 (VVQIAVMCVLSLTVVFGIFFL). The residue at position 98 (serine 98) is a Phosphoserine.

It belongs to the reprimo family.

Its subcellular location is the cytoplasm. The protein resides in the membrane. In terms of biological role, may be involved in the regulation of p53-dependent G2 arrest of the cell cycle. Seems to induce cell cycle arrest by inhibiting CDK1 activity and nuclear translocation of the CDC2 cyclin B1 complex. This is Protein reprimo (Rprm) from Mus musculus (Mouse).